Consider the following 122-residue polypeptide: Large ribosomal subunit protein uL14 (122 aa).

Belongs to the universal ribosomal protein uL14 family. As to quaternary structure, part of the 50S ribosomal subunit. Forms a cluster with proteins L3 and L19. In the 70S ribosome, L14 and L19 interact and together make contacts with the 16S rRNA in bridges B5 and B8.

In terms of biological role, binds to 23S rRNA. Forms part of two intersubunit bridges in the 70S ribosome. The protein is Large ribosomal subunit protein uL14 of Nitratiruptor sp. (strain SB155-2).